Here is a 171-residue protein sequence, read N- to C-terminus: Translationally-controlled tumor protein homolog (171 aa).

Residues M1–C171 enclose the TCTP domain.

It belongs to the TCTP family.

Its subcellular location is the cytoplasm. Functionally, involved in calcium binding and microtubule stabilization. This chain is Translationally-controlled tumor protein homolog (tpt1), found in Labeo rohita (Indian major carp).